Here is a 1408-residue protein sequence, read N- to C-terminus: DNA-directed RNA polymerase subunit beta' (1408 aa).

Zn(2+) contacts are provided by C70, C72, C85, and C88. Residues D460, D462, and D464 each coordinate Mg(2+). C814, C887, C894, and C897 together coordinate Zn(2+).

Belongs to the RNA polymerase beta' chain family. In terms of assembly, the RNAP catalytic core consists of 2 alpha, 1 beta, 1 beta' and 1 omega subunit. When a sigma factor is associated with the core the holoenzyme is formed, which can initiate transcription. Requires Mg(2+) as cofactor. Zn(2+) serves as cofactor.

The enzyme catalyses RNA(n) + a ribonucleoside 5'-triphosphate = RNA(n+1) + diphosphate. Its function is as follows. DNA-dependent RNA polymerase catalyzes the transcription of DNA into RNA using the four ribonucleoside triphosphates as substrates. This Hydrogenovibrio crunogenus (strain DSM 25203 / XCL-2) (Thiomicrospira crunogena) protein is DNA-directed RNA polymerase subunit beta'.